The primary structure comprises 129 residues: Small ribosomal subunit protein uS11 (129 aa).

Belongs to the universal ribosomal protein uS11 family. Part of the 30S ribosomal subunit. Interacts with proteins S7 and S18. Binds to IF-3.

Located on the platform of the 30S subunit, it bridges several disparate RNA helices of the 16S rRNA. Forms part of the Shine-Dalgarno cleft in the 70S ribosome. The chain is Small ribosomal subunit protein uS11 from Bradyrhizobium sp. (strain ORS 278).